A 142-amino-acid chain; its full sequence is uncharacterized protein (142 aa).

This is an uncharacterized protein from Homo sapiens (Human).